A 455-amino-acid chain; its full sequence is SUN domain-containing protein 2 (455 aa).

The span at 1-12 (MSASTVSITASP) shows a compositional bias: polar residues. Residues 1–99 (MSASTVSITA…RTRKSQGNKI (99 aa)) are disordered. Position 2 is an N-acetylserine (S2). Residues 2-105 (SASTVSITAS…GNKIDRGKWK (104 aa)) are Nuclear-facing. At S63 the chain carries Phosphoserine. Residues 74–88 (KSGSTATGTNTTTTQ) show a composition bias toward low complexity. The Nuclear localization signal signature appears at 88-95 (QRRTRKSQ). A helical transmembrane segment spans residues 106 to 128 (TVVRVFAKQFGALLLLVGLIQLI). Over 129-455 (RKLTLKDSSL…ELDSVSVAHA (327 aa)) the chain is Perinuclear space. Residues 201–225 (LHSELKKVESKTERLQVSVDELNAK) are a coiled coil. The 163-residue stretch at 285–447 (GGAFVMGHSD…YRFRVHGREL (163 aa)) folds into the SUN domain.

As to quaternary structure, forms homomers (e.g. dimers, trimers and tetramers) and heteromers with SUN1. Interacts with SUN3, SUN4 and TIK. Core component of the LINC complex which is composed of inner nuclear membrane SUN domain-containing proteins coupled to outer nuclear membrane WIP and WIT proteins. The LINC complex also involves nucleoskeletal proteins CRWN/LINC and possibly KAKU4 and the cytoskeletal myosin KAKU1. Interacts with LINC1, WIP1, WIP2 and WIP3 at the nuclear envelope (NE). Interacts with SINE1, SINE2, SINE3 and SINE4. Interacts with NEAP1, NEA2 and NEAP3. As to expression, expressed in roots, hypocotyls, cotyledons and leaves and inflorescences.

Its subcellular location is the nucleus inner membrane. It is found in the cytoplasm. The protein resides in the cytoskeleton. The protein localises to the phragmoplast. It localises to the endoplasmic reticulum membrane. Its subcellular location is the nucleus envelope. Its function is as follows. Component of SUN-protein-containing multivariate complexes also called LINC complexes which link the nucleoskeleton and cytoskeleton by providing versatile outer nuclear membrane attachment sites for cytoskeletal filaments. Required for the maintenance and/or formation of polarized nuclear shape in root hairs. Modulates the anchoring and mobility of WIP proteins in the nuclear envelope (NE). In association with SUN1, may be involved in telomere attachment to nuclear envelope in the prophase of meiosis. As component of the SUN-WIP-WIT2-KAKU1 complex, mediates the transfer of cytoplasmic forces to the nuclear envelope (NE), leading to nuclear shape changes. This is SUN domain-containing protein 2 from Arabidopsis thaliana (Mouse-ear cress).